The following is an 869-amino-acid chain: Bifunctional uridylyltransferase/uridylyl-removing enzyme (869 aa).

Positions 1–331 (MPTNLPALPM…FPSESQVTRV (331 aa)) are uridylyltransferase. Positions 332–688 (INERFVERQG…ARISPAGEGL (357 aa)) are uridylyl-removing. Residues 450 to 572 (VDQHILMVVR…VGDERHLTAL (123 aa)) form the HD domain. ACT domains lie at 689 to 773 (QVAV…PSQG) and 800 to 869 (LLSL…ALEI).

The protein belongs to the GlnD family. The cofactor is Mg(2+).

It catalyses the reaction [protein-PII]-L-tyrosine + UTP = [protein-PII]-uridylyl-L-tyrosine + diphosphate. The enzyme catalyses [protein-PII]-uridylyl-L-tyrosine + H2O = [protein-PII]-L-tyrosine + UMP + H(+). Its activity is regulated as follows. Uridylyltransferase (UTase) activity is inhibited by glutamine, while glutamine activates uridylyl-removing (UR) activity. Modifies, by uridylylation and deuridylylation, the PII regulatory proteins (GlnB and homologs), in response to the nitrogen status of the cell that GlnD senses through the glutamine level. Under low glutamine levels, catalyzes the conversion of the PII proteins and UTP to PII-UMP and PPi, while under higher glutamine levels, GlnD hydrolyzes PII-UMP to PII and UMP (deuridylylation). Thus, controls uridylylation state and activity of the PII proteins, and plays an important role in the regulation of nitrogen assimilation and metabolism. This Cupriavidus pinatubonensis (strain JMP 134 / LMG 1197) (Cupriavidus necator (strain JMP 134)) protein is Bifunctional uridylyltransferase/uridylyl-removing enzyme.